Reading from the N-terminus, the 408-residue chain is Imidazolonepropionase (408 aa).

Fe(3+)-binding residues include H73 and H75. Zn(2+) is bound by residues H73 and H75. Residues R82, Y145, and H178 each contribute to the 4-imidazolone-5-propanoate site. Residue Y145 coordinates N-formimidoyl-L-glutamate. Position 243 (H243) interacts with Fe(3+). Residue H243 coordinates Zn(2+). 4-imidazolone-5-propanoate is bound at residue Q246. Position 318 (D318) interacts with Fe(3+). D318 serves as a coordination point for Zn(2+). Positions 320 and 322 each coordinate N-formimidoyl-L-glutamate. S323 is a 4-imidazolone-5-propanoate binding site.

This sequence belongs to the metallo-dependent hydrolases superfamily. HutI family. The cofactor is Zn(2+). Requires Fe(3+) as cofactor.

It is found in the cytoplasm. It catalyses the reaction 4-imidazolone-5-propanoate + H2O = N-formimidoyl-L-glutamate. It participates in amino-acid degradation; L-histidine degradation into L-glutamate; N-formimidoyl-L-glutamate from L-histidine: step 3/3. Its function is as follows. Catalyzes the hydrolytic cleavage of the carbon-nitrogen bond in imidazolone-5-propanoate to yield N-formimidoyl-L-glutamate. It is the third step in the universal histidine degradation pathway. The protein is Imidazolonepropionase of Shewanella putrefaciens (strain CN-32 / ATCC BAA-453).